Here is a 419-residue protein sequence, read N- to C-terminus: Protein indeterminate-domain 14 (419 aa).

Residues Met1–Ser58 are disordered. C2H2-type zinc fingers lie at residues Tyr70–His92, Tyr112–His142, and Trp148–His175. Zn(2+)-binding residues include Cys150, Cys153, His166, Cys170, Cys177, Cys179, His192, and Cys196. The CCHC-type 2; atypical zinc-finger motif lies at His175–Val198. The interval Arg185–Thr197 is SHR-binding. 2 disordered regions span residues Arg200–Leu259 and Ser298–Arg318. 2 stretches are compositionally biased toward low complexity: residues Gln213 to Asn230 and Arg246 to Leu259. The stretch at Glu313–Ala349 forms a coiled coil.

As to quaternary structure, homo- and heterodimer of IDD14alpha and IDD14beta. As to expression, expressed in cotyledons and the vasculature of reosette leaves. Weak expression in hypocotyls and floral organs, but not detected in roots and inflorescence stems.

The protein localises to the nucleus. Functionally, transcription factor regulating starch metabolism by binding directly to the promoter of QQS. The IDD14beta isoform attenuates the transcription factor activity by competitively forming heterodimers with reduced DNA-binding capacity. Regulates lateral organ morphogenesis and gravitropic responses. Has a redundant role with IDD16 in directing leaf and floral organ morphogenesis. Involved in the establishment of auxin gradients through the regulation of auxin biosynthesis and transport. This Arabidopsis thaliana (Mouse-ear cress) protein is Protein indeterminate-domain 14.